A 119-amino-acid polypeptide reads, in one-letter code: Large ribosomal subunit protein uL22c (119 aa).

Belongs to the universal ribosomal protein uL22 family. As to quaternary structure, part of the 50S ribosomal subunit.

It localises to the plastid. It is found in the chloroplast. In terms of biological role, this protein binds specifically to 23S rRNA. Its function is as follows. The globular domain of the protein is located near the polypeptide exit tunnel on the outside of the subunit, while an extended beta-hairpin is found that lines the wall of the exit tunnel in the center of the 70S ribosome. In Mesostigma viride (Green alga), this protein is Large ribosomal subunit protein uL22c (rpl22).